Consider the following 585-residue polypeptide: Voltage-gated potassium channel KCNC1 (585 aa).

Residues Met-1–Arg-190 lie on the Cytoplasmic side of the membrane. Ser-44 is modified (phosphoserine). Positions 77, 83, 104, and 105 each coordinate Zn(2+). The disordered stretch occupies residues Ser-121–Asp-147. 4 positions are modified to phosphoserine: Ser-130, Ser-142, Ser-158, and Ser-160. Acidic residues predominate over residues Ser-130–Asp-147. Residues Tyr-191–Leu-209 form a helical membrane-spanning segment. Residues Asn-220 and Asn-229 are each glycosylated (N-linked (GlcNAc...) asparagine). Residues Ile-248 to Cys-267 form a helical membrane-spanning segment. At Pro-268–Asn-276 the chain is on the cytoplasmic side. Residues Ser-277 to Leu-295 traverse the membrane as a helical segment. A helical; Voltage-sensor membrane pass occupies residues Phe-309–Leu-331. At Arg-332–Glu-344 the chain is on the cytoplasmic side. Residues Phe-345–Ala-366 traverse the membrane as a helical segment. K(+)-binding residues include Thr-400, Leu-401, Gly-402, and Tyr-403. The short motif at Thr-400–Asp-405 is the Selectivity filter element. The chain crosses the membrane as a helical span at residues Leu-415–Val-436. Over Asn-437 to Thr-585 the chain is Cytoplasmic. Ser-474 is modified (phosphoserine). Thr-483 bears the Phosphothreonine mark.

The protein belongs to the potassium channel family. C (Shaw) (TC 1.A.1.2) subfamily. Kv3.1/KCNC1 sub-subfamily. In terms of assembly, homotetramer. Homomultimer. Heteromultimer with KCNG3, KCNG4 and KCNV2. Heteromultimer with KCNC2. Heterotetramer with KCNC3. Interacts with the ancillary subunits KCNE1 and KCNE2; the interaction modulates channel activity. N-glycosylated; contains sialylated glycans. In terms of tissue distribution, expressed in brain. Expressed in globus pallidal neurons of the basal ganglia (at protein level). Detected on Purkinje cells in the cerebellum molecular layer (at protein level).

The protein resides in the cell membrane. It is found in the cell projection. The protein localises to the axon. It localises to the presynaptic cell membrane. It catalyses the reaction K(+)(in) = K(+)(out). Voltage-gated potassium channel that opens in response to the voltage difference across the membrane and through which potassium ions pass in accordance with their electrochemical gradient. The mechanism is time-dependent and inactivation is slow. Plays an important role in the rapid repolarization of fast-firing brain neurons. Can form functional homotetrameric channels and heterotetrameric channels that contain variable proportions of KCNC2, and possibly other family members as well. Contributes to fire sustained trains of very brief action potentials at high frequency in pallidal neurons. This Rattus norvegicus (Rat) protein is Voltage-gated potassium channel KCNC1.